The following is a 240-amino-acid chain: MKMMDANEIISFIQKSEKKTPVKVYIKGDLKEVTFPGTVQAFVNKKAGVLFGEWSEIKVILEENKKHIADYVVENDRRNSAIPMLDLKGIKARIEPGAIIRDHVEIGDNAVIMMNATINIGAVIGEGSMIDMNAVLGGRATVGKNCHVGAGAVLAGVIEPPSAKPVIVEDDVVIGANVVVLEGVTVGKGAVVAAGAIVTEDVPPYTVVAGTPARVIKKIDEKTKAKTEIKQELRQLNPEK.

It belongs to the transferase hexapeptide repeat family. DapH subfamily.

The enzyme catalyses (S)-2,3,4,5-tetrahydrodipicolinate + acetyl-CoA + H2O = L-2-acetamido-6-oxoheptanedioate + CoA. It participates in amino-acid biosynthesis; L-lysine biosynthesis via DAP pathway; LL-2,6-diaminopimelate from (S)-tetrahydrodipicolinate (acetylase route): step 1/3. In terms of biological role, catalyzes the transfer of an acetyl group from acetyl-CoA to tetrahydrodipicolinate. The polypeptide is 2,3,4,5-tetrahydropyridine-2,6-dicarboxylate N-acetyltransferase (Bacillus cytotoxicus (strain DSM 22905 / CIP 110041 / 391-98 / NVH 391-98)).